Consider the following 469-residue polypeptide: Glutamate--tRNA ligase (469 aa).

Residues 9-19 carry the 'HIGH' region motif; it reads PSPTGFLHVGG. Residues Cys-98, Cys-100, Cys-125, and Asp-127 each contribute to the Zn(2+) site. Positions 236-240 match the 'KMSKS' region motif; it reads KLSKR. Residue Lys-239 coordinates ATP.

This sequence belongs to the class-I aminoacyl-tRNA synthetase family. Glutamate--tRNA ligase type 1 subfamily. In terms of assembly, monomer. Requires Zn(2+) as cofactor.

It localises to the cytoplasm. It carries out the reaction tRNA(Glu) + L-glutamate + ATP = L-glutamyl-tRNA(Glu) + AMP + diphosphate. In terms of biological role, catalyzes the attachment of glutamate to tRNA(Glu) in a two-step reaction: glutamate is first activated by ATP to form Glu-AMP and then transferred to the acceptor end of tRNA(Glu). The polypeptide is Glutamate--tRNA ligase (Shewanella putrefaciens (strain CN-32 / ATCC BAA-453)).